We begin with the raw amino-acid sequence, 244 residues long: Probable ABC transporter ATP-binding protein p29 (244 aa).

The region spanning 6 to 241 (LVFDQVSLRY…KLTKQKLMQI (236 aa)) is the ABC transporter domain. Residue 38-45 (GKSGVGKT) coordinates ATP.

The protein belongs to the ABC transporter superfamily.

Functionally, part of a high-affinity transport system. This is Probable ABC transporter ATP-binding protein p29 (p29) from Mycoplasma pneumoniae (strain ATCC 29342 / M129 / Subtype 1) (Mycoplasmoides pneumoniae).